Consider the following 336-residue polypeptide: Fimbrial adhesin PapGII (336 aa).

The N-terminal stretch at 1–20 (MKKWFPALLFSLCVSGESSA) is a signal peptide. 2 disulfide bridges follow: C64-C138 and C217-C249. D-galactose-binding positions include E79 and 124 to 127 (GYKW).

This sequence belongs to the adhesin PapG family.

The protein localises to the secreted. The protein resides in the fimbrium. In terms of biological role, tip adhesin component of type P pili that plays a critical role in kidney infection through targeted interaction with the globoseries glycolipids containing the Gal-alpha(1-4)-Gal disaccharide present on uroepithelial cells. In turn, transcriptionally regulates host gene expression in kidney cells, leading to inflammatory pathway activation and renal tissue damage. Acts thereby as key determinant of invasive uropathogenic E.coli (UPEC), which cause pyelonephritis and urinary-source bacteremia. The chain is Fimbrial adhesin PapGII from Escherichia coli.